Here is a 407-residue protein sequence, read N- to C-terminus: Imidazolonepropionase (407 aa).

Fe(3+) is bound by residues H72 and H74. H72 and H74 together coordinate Zn(2+). Residues R81, Y144, and H177 each contribute to the 4-imidazolone-5-propanoate site. Residue Y144 participates in N-formimidoyl-L-glutamate binding. Residue H242 participates in Fe(3+) binding. H242 contributes to the Zn(2+) binding site. Residue Q245 participates in 4-imidazolone-5-propanoate binding. D317 contacts Fe(3+). D317 is a binding site for Zn(2+). Positions 319 and 321 each coordinate N-formimidoyl-L-glutamate. T322 is a 4-imidazolone-5-propanoate binding site.

It belongs to the metallo-dependent hydrolases superfamily. HutI family. It depends on Zn(2+) as a cofactor. Requires Fe(3+) as cofactor.

Its subcellular location is the cytoplasm. The enzyme catalyses 4-imidazolone-5-propanoate + H2O = N-formimidoyl-L-glutamate. The protein operates within amino-acid degradation; L-histidine degradation into L-glutamate; N-formimidoyl-L-glutamate from L-histidine: step 3/3. Catalyzes the hydrolytic cleavage of the carbon-nitrogen bond in imidazolone-5-propanoate to yield N-formimidoyl-L-glutamate. It is the third step in the universal histidine degradation pathway. The protein is Imidazolonepropionase of Rhizobium rhizogenes (Agrobacterium rhizogenes).